A 193-amino-acid chain; its full sequence is Phosphoheptose isomerase (193 aa).

In terms of domain architecture, SIS spans 37–193 (LADSFKAGGK…QLIEKEMVKA (157 aa)). 52 to 54 (NGG) is a substrate binding site. Residues His-61 and Glu-65 each coordinate Zn(2+). Substrate is bound by residues Glu-65, 93–94 (ND), 119–121 (STS), Ser-124, and Gln-172. Zn(2+)-binding residues include Gln-172 and His-180.

The protein belongs to the SIS family. GmhA subfamily. Homotetramer. Zn(2+) is required as a cofactor.

The protein localises to the cytoplasm. It carries out the reaction 2 D-sedoheptulose 7-phosphate = D-glycero-alpha-D-manno-heptose 7-phosphate + D-glycero-beta-D-manno-heptose 7-phosphate. Its pathway is carbohydrate biosynthesis; D-glycero-D-manno-heptose 7-phosphate biosynthesis; D-glycero-alpha-D-manno-heptose 7-phosphate and D-glycero-beta-D-manno-heptose 7-phosphate from sedoheptulose 7-phosphate: step 1/1. In terms of biological role, catalyzes the isomerization of sedoheptulose 7-phosphate in D-glycero-D-manno-heptose 7-phosphate. This is Phosphoheptose isomerase from Yersinia pseudotuberculosis serotype O:1b (strain IP 31758).